The chain runs to 309 residues: Sporulation sigma-E factor-processing peptidase (309 aa).

Transmembrane regions (helical) follow at residues 7-27 (VIWL…AFIL), 36-55 (LVGG…TPFS), 61-78 (PAGK…TFGF), 88-105 (LFSF…IIGA), and 130-147 (PISW…WFFS). Asp183 is a catalytic residue.

This sequence belongs to the peptidase U4 family. As to quaternary structure, self-associates. Interacts with SigE. Interacts with SpoIIR.

Its subcellular location is the cell membrane. Its function is as follows. Probable aspartic protease that is responsible for the proteolytic cleavage of the RNA polymerase sigma E factor (SigE/spoIIGB) to yield the active peptide in the mother cell during sporulation. Responds to a signal from the forespore that is triggered by the extracellular signal protein SpoIIR. This Bacillus subtilis (strain 168) protein is Sporulation sigma-E factor-processing peptidase (spoIIGA).